Here is a 755-residue protein sequence, read N- to C-terminus: LIM domain and actin-binding protein 1 (755 aa).

M1 bears the N-acetylmethionine mark. Phosphoserine is present on S15. Residues 43–56 show a composition bias toward basic and acidic residues; sequence KAAEEANMERKKNN. The segment at 43–151 is disordered; that stretch reads KAAEEANMER…YPRSEDSHDF (109 aa). Polar residues predominate over residues 88-97; sequence DSLPNSSSDG. S132 carries the phosphoserine modification. Residues 164 to 166 carry the Required for interaction with NPC1L1 motif; sequence CLG. 2 stretches are compositionally biased toward basic and acidic residues: residues 168-177 and 199-208; these read SRHEAEKPEM and MMFEKGEHSQ. The tract at residues 168–226 is disordered; sequence SRHEAEKPEMSENTETSGKIEKYNVPLNRLKMMFEKGEHSQNKSPWTQGRNAGGRRLSE. Phosphoserine occurs at positions 225, 230, and 242. Residues 241–379 form a disordered region; sequence LSSSAFNSEK…ESSPSKTAKK (139 aa). Residues 249–258 show a composition bias toward basic and acidic residues; the sequence is EKNESKRNLE. S263 is modified (phosphoserine). The span at 292–305 shows a compositional bias: basic and acidic residues; the sequence is KPSESKTHKWEQKE. Residues 342–354 show a composition bias toward polar residues; sequence CNSQGRSEAQQPI. Residues S348, S360, S367, and S372 each carry the phosphoserine modification. Over residues 363 to 375 the composition is skewed to polar residues; the sequence is ARTSSLPESSPSK. In terms of domain architecture, LIM zinc-binding spans 386 to 446; sequence ESCVECQKTV…KPHFNQLFKS (61 aa). Position 437 is an N6-succinyllysine (K437). Disordered regions lie at residues 468-493 and 505-714; these read ENEE…GVED and SMEA…DTTT. The residue at position 488 (S488) is a Phosphoserine. The tract at residues 491–511 is required for interaction with MYO5B; the sequence is VEDAPIAKVGVLAASMEAKAS. Basic and acidic residues-rich tracts occupy residues 512–526 and 555–566; these read SQRE…ETKK and WPPEDEVCKTEA. A compositionally biased stretch (low complexity) spans 599–611; it reads SSVKSPKPLSPSL. Phosphoserine is present on residues S600, S603, S608, and S616. Basic and acidic residues-rich tracts occupy residues 638 to 653 and 662 to 673; these read RPSR…RWQS and EAPRGRDGRSFE. 3 positions are modified to phosphoserine: S697, S722, and S737.

In terms of assembly, interacts with NPC1L1; bridges NPC1L1 with MYO5B. Interacts with MYO5B; bridges MYO5B with NPC1L1. Interacts with PXN; this complex stabilizes actin dynamics. Interacts with F-actin and G-actin. Interacts with LUZP1 (via C-terminus); both proteins restrict ciliation and may work together to regulate this process. Binds RAB40B (GTP-bound); interaction influences LIMA1 subcellular localization in lamellipodia during cell migration. Post-translationally, phosphorylation of the C-terminal region by MAPK1/MAPK3 reduces its association with F-actin and contributes to actin filament reorganization and enhanced cell motility. In terms of processing, ubiquitinated by the ECS(RAB40B) complex leading to its degradation. In terms of tissue distribution, expressed throughout the kidney, including renal cortex, medulla, and glomeruli. Expressed in glomeruli, tubular epithelial cells, and extraglomerular vascular endothelial cells (at protein level).

It localises to the cytoplasm. The protein resides in the cell junction. It is found in the focal adhesion. Its subcellular location is the cytoskeleton. The protein localises to the stress fiber. It localises to the cell membrane. The protein resides in the cell projection. It is found in the ruffle. Its subcellular location is the lamellipodium. In terms of biological role, actin-binding protein involved in actin cytoskeleton regulation and dynamics. Increases the number and size of actin stress fibers and inhibits membrane ruffling. Inhibits actin filament depolymerization. Bundles actin filaments, delays filament nucleation and reduces formation of branched filaments. Acts as a negative regulator of primary cilium formation. Plays a role in cholesterol homeostasis. Influences plasma cholesterol levels through regulation of intestinal cholesterol absorption. May act as a scaffold protein by regulating NPC1L1 transportation, an essential protein for cholesterol absorption, to the plasma membrane by recruiting MYO5B to NPC1L1, and thus facilitates cholesterol uptake. This chain is LIM domain and actin-binding protein 1, found in Rattus norvegicus (Rat).